A 418-amino-acid chain; its full sequence is N-acetylglucosamine-6-phosphate deacetylase (418 aa).

Glutamate 154 serves as a coordination point for a divalent metal cation. 165-166 (CH) is a binding site for substrate. 2 residues coordinate a divalent metal cation: histidine 223 and histidine 244. Substrate-binding positions include 247 to 248 (NA), arginine 255, and 281 to 284 (DGIH). Aspartate 306 functions as the Proton donor/acceptor in the catalytic mechanism. Substrate is bound at residue 340–342 (TAG).

This sequence belongs to the metallo-dependent hydrolases superfamily. NagA family. A divalent metal cation serves as cofactor.

The catalysed reaction is N-acetyl-D-glucosamine 6-phosphate + H2O = D-glucosamine 6-phosphate + acetate. The chain is N-acetylglucosamine-6-phosphate deacetylase from Caenorhabditis elegans.